A 244-amino-acid chain; its full sequence is uncharacterized protein (244 aa).

Composition is skewed to basic and acidic residues over residues 1–10 (MNDPFARMET) and 100–127 (GTRG…HGEE). Disordered regions lie at residues 1–79 (MNDP…GEEL), 100–130 (GTRG…EPNY), and 219–244 (TGAS…EIKL).

This is an uncharacterized protein from Homo sapiens (Human).